A 145-amino-acid chain; its full sequence is uncharacterized protein (145 aa).

Residues 97–117 (ISMLLLIVIIAIGLTISYMVI) form a helical membrane-spanning segment.

It localises to the membrane. This is an uncharacterized protein from Methanocaldococcus jannaschii (strain ATCC 43067 / DSM 2661 / JAL-1 / JCM 10045 / NBRC 100440) (Methanococcus jannaschii).